The primary structure comprises 312 residues: Ribosomal protein L11 methyltransferase (312 aa).

S-adenosyl-L-methionine-binding residues include Thr-160, Gly-181, Asp-203, and Asn-246.

The protein belongs to the methyltransferase superfamily. PrmA family.

It is found in the cytoplasm. It catalyses the reaction L-lysyl-[protein] + 3 S-adenosyl-L-methionine = N(6),N(6),N(6)-trimethyl-L-lysyl-[protein] + 3 S-adenosyl-L-homocysteine + 3 H(+). Methylates ribosomal protein L11. The sequence is that of Ribosomal protein L11 methyltransferase from Staphylococcus aureus (strain JH1).